We begin with the raw amino-acid sequence, 206 residues long: Probable glutathione S-transferase 9 (206 aa).

The 78-residue stretch at valine 2–glycine 79 folds into the GST N-terminal domain. Glutathione contacts are provided by residues tyrosine 8, tryptophan 39, lysine 43, glycine 49 to valine 51, and glutamine 63 to serine 64. Residues serine 81–arginine 206 enclose the GST C-terminal domain.

Belongs to the GST superfamily. Sigma family.

The catalysed reaction is RX + glutathione = an S-substituted glutathione + a halide anion + H(+). Its function is as follows. Conjugation of reduced glutathione to a wide number of exogenous and endogenous hydrophobic electrophiles. This Caenorhabditis elegans protein is Probable glutathione S-transferase 9 (gst-9).